The primary structure comprises 1164 residues: Toxin subunit YenA1 (1164 aa).

The tract at residues 106–131 (RLEKSNSPLVPQTSSSTDASSESQTN) is disordered. Positions 118 to 130 (TSSSTDASSESQT) are enriched in low complexity.

As to quaternary structure, semipurified toxin complex consists of at least YenA1, YenA2, YenB, YenC1, YenC2, Chi1 and Chi2. The Yen-TC:K9 subcomplex is about 26 nm tall and 22 nm in diameter with 5-fold symmetry and 5 copies of YenA1, YenA2, Chi1 and Chi2; the chitinase subunits may be solvent accessible on the exterior the complex. The Yen-TC:K9 subcomplex has no insecticidal activity. The native complex with additional YenB, YenC1 and YenC2 subunits is 16 nm taller and is insecticidal; the toxicity-conferring subunits are present at about 1 copy each.

It localises to the secreted. Its activity is regulated as follows. Toxin complex is secreted when grown at 25 degrees Celsius or less; at higher temperatures the proteins are present intracellularly but not secreted. Functionally, part of an orally active toxin complex (TC) with strong insecticidal effects on larvae of the Coleoptera Costelytra zealandica, Acrossidius tasmania and Adoryphorus couloni and some Lepidoptera larvae. The TC has an endochitinase activity. The protein is Toxin subunit YenA1 of Yersinia entomophaga.